The following is a 599-amino-acid chain: Elongation factor 4 (599 aa).

In terms of domain architecture, tr-type G spans 4-186; it reads KYIRNFSIIA…AIVEKVPPPK (183 aa). Residues 16–21 and 133–136 each bind GTP; these read DHGKST and NKID.

Belongs to the TRAFAC class translation factor GTPase superfamily. Classic translation factor GTPase family. LepA subfamily.

It localises to the cell inner membrane. The catalysed reaction is GTP + H2O = GDP + phosphate + H(+). Its function is as follows. Required for accurate and efficient protein synthesis under certain stress conditions. May act as a fidelity factor of the translation reaction, by catalyzing a one-codon backward translocation of tRNAs on improperly translocated ribosomes. Back-translocation proceeds from a post-translocation (POST) complex to a pre-translocation (PRE) complex, thus giving elongation factor G a second chance to translocate the tRNAs correctly. Binds to ribosomes in a GTP-dependent manner. The sequence is that of Elongation factor 4 from Bdellovibrio bacteriovorus (strain ATCC 15356 / DSM 50701 / NCIMB 9529 / HD100).